A 230-amino-acid chain; its full sequence is Octanoyltransferase (230 aa).

The BPL/LPL catalytic domain occupies 31–230 (PETPDELWIC…GDKLTRYLAP (200 aa)). Residues 70–77 (RGGQVTYH), 163–165 (ALG), and 176–178 (GVA) each bind substrate. Cys194 serves as the catalytic Acyl-thioester intermediate.

This sequence belongs to the LipB family.

The protein resides in the cytoplasm. The catalysed reaction is octanoyl-[ACP] + L-lysyl-[protein] = N(6)-octanoyl-L-lysyl-[protein] + holo-[ACP] + H(+). It functions in the pathway protein modification; protein lipoylation via endogenous pathway; protein N(6)-(lipoyl)lysine from octanoyl-[acyl-carrier-protein]: step 1/2. Catalyzes the transfer of endogenously produced octanoic acid from octanoyl-acyl-carrier-protein onto the lipoyl domains of lipoate-dependent enzymes. Lipoyl-ACP can also act as a substrate although octanoyl-ACP is likely to be the physiological substrate. This is Octanoyltransferase from Albidiferax ferrireducens (strain ATCC BAA-621 / DSM 15236 / T118) (Rhodoferax ferrireducens).